Reading from the N-terminus, the 501-residue chain is Type II methyltransferase M.BsuBI (501 aa).

Belongs to the N(4)/N(6)-methyltransferase family.

It carries out the reaction a 2'-deoxyadenosine in DNA + S-adenosyl-L-methionine = an N(6)-methyl-2'-deoxyadenosine in DNA + S-adenosyl-L-homocysteine + H(+). A beta subtype methylase that recognizes the double-stranded sequence 5'-CTGCAG-3', methylates A-5 on both strands, and protects the DNA from cleavage by the BsuBI endonuclease. The chain is Type II methyltransferase M.BsuBI (hsdBM) from Bacillus subtilis.